The primary structure comprises 197 residues: Class A basic helix-loop-helix protein 15 (197 aa).

Residues 1-12 (MKTKNRPPRRRT) are compositionally biased toward basic residues. Disordered stretches follow at residues 1 to 82 (MKTK…ERER) and 178 to 197 (QPQG…REGS). 2 positions are modified to phosphothreonine: Thr12 and Thr25. The span at 65-82 (GRRENSVQRRLESNERER) shows a compositional bias: basic and acidic residues. In terms of domain architecture, bHLH spans 72-124 (QRRLESNERERQRMHKLNNAFQALREVIPHVRADKKLSKIETLTLAKNYIKSL).

Forms homodimers or heterodimers with TCF3 gene products E12 and E47. These dimers bind to the E-box site, however, heterodimer with MYOD1 does not bind target DNA. Expressed in pancreatic tissue only in acinar cells. There is a complete absence of expression in intra- or interlobular pancreatic ducts and in all islet cells.

It localises to the nucleus. Its function is as follows. Plays a role in controlling the transcriptional activity of MyoD, ensuring that expanding myoblast populations remain undifferentiated. Repression may occur through muscle-specific E-box occupancy by homodimers. May also negatively regulate bHLH-mediated transcription through an N-terminal repressor domain. Serves as a key regulator of acinar cell function, stability, and identity. Also required for normal organelle localization in exocrine cells and for mitochondrial calcium ion transport. May function as a unique regulator of gene expression in several different embryonic and postnatal cell lineages. Binds to the E-box consensus sequence 5'-CANNTG-3'. The polypeptide is Class A basic helix-loop-helix protein 15 (Bhlha15) (Mus musculus (Mouse)).